The following is a 795-amino-acid chain: Lon protease (795 aa).

Residues 17-214 enclose the Lon N-terminal domain; it reads YPLMPLRDIV…KVYKFLQDEI (198 aa). ATP is bound at residue 370–377; sequence GPPGVGKT. In terms of domain architecture, Lon proteolytic spans 605–787; the sequence is KPLVGVATGL…EEVFKIALVR (183 aa). Catalysis depends on residues serine 692 and lysine 735.

The protein belongs to the peptidase S16 family. As to quaternary structure, homohexamer. Organized in a ring with a central cavity.

Its subcellular location is the cytoplasm. It catalyses the reaction Hydrolysis of proteins in presence of ATP.. In terms of biological role, ATP-dependent serine protease that mediates the selective degradation of mutant and abnormal proteins as well as certain short-lived regulatory proteins. Required for cellular homeostasis and for survival from DNA damage and developmental changes induced by stress. Degrades polypeptides processively to yield small peptide fragments that are 5 to 10 amino acids long. Binds to DNA in a double-stranded, site-specific manner. The chain is Lon protease from Aquifex aeolicus (strain VF5).